Consider the following 428-residue polypeptide: Trigger factor (428 aa).

Positions 163-248 (GNIAVIDFKG…VKEIKVKELP (86 aa)) constitute a PPIase FKBP-type domain.

The protein belongs to the FKBP-type PPIase family. Tig subfamily.

The protein localises to the cytoplasm. The enzyme catalyses [protein]-peptidylproline (omega=180) = [protein]-peptidylproline (omega=0). Involved in protein export. Acts as a chaperone by maintaining the newly synthesized protein in an open conformation. Functions as a peptidyl-prolyl cis-trans isomerase. The polypeptide is Trigger factor (Clostridium perfringens (strain ATCC 13124 / DSM 756 / JCM 1290 / NCIMB 6125 / NCTC 8237 / Type A)).